The following is a 401-amino-acid chain: Serine/threonine transporter SstT (401 aa).

8 consecutive transmembrane segments (helical) span residues 17 to 37 (IGIG…ITVI), 40 to 60 (FGSL…LTLV), 78 to 98 (VICL…GASY), 138 to 158 (ALAT…GLAF), 179 to 199 (VVGW…FDTI), 212 to 232 (LLLL…NPLI), 295 to 315 (MAGA…TLGI), and 336 to 356 (ASGV…LFGI).

This sequence belongs to the dicarboxylate/amino acid:cation symporter (DAACS) (TC 2.A.23) family.

Its subcellular location is the cell membrane. The enzyme catalyses L-serine(in) + Na(+)(in) = L-serine(out) + Na(+)(out). The catalysed reaction is L-threonine(in) + Na(+)(in) = L-threonine(out) + Na(+)(out). Functionally, involved in the import of serine and threonine into the cell, with the concomitant import of sodium (symport system). This Streptococcus suis (strain 98HAH33) protein is Serine/threonine transporter SstT.